A 342-amino-acid chain; its full sequence is Apurinic-apyrimidinic endonuclease 1 (342 aa).

Residues His-61, Glu-136, Asp-170, His-173, His-207, Asp-220, His-222, and Glu-252 each coordinate Zn(2+). The segment covering 299–310 (HLNKFEKKEAKK) has biased composition (basic and acidic residues). Residues 299-342 (HLNKFEKKEAKKDRKKKSKDGDQTTLLLRKKQKLGNAEVKSLDE) form a disordered region.

It belongs to the AP endonuclease 2 family. The cofactor is Zn(2+).

It localises to the nucleus. DNA repair enzyme that cleaves apurinic/apyrimidinic (AP) sites and removes 3'-blocking groups present at single strand breaks of damaged DNA. Provides back-up AP endonuclease (APE) activity to apn2 together with uve1. The chain is Apurinic-apyrimidinic endonuclease 1 (apn1) from Schizosaccharomyces pombe (strain 972 / ATCC 24843) (Fission yeast).